A 141-amino-acid chain; its full sequence is Large ribosomal subunit protein uL11 (141 aa).

This sequence belongs to the universal ribosomal protein uL11 family. Part of the ribosomal stalk of the 50S ribosomal subunit. Interacts with L10 and the large rRNA to form the base of the stalk. L10 forms an elongated spine to which L12 dimers bind in a sequential fashion forming a multimeric L10(L12)X complex. Post-translationally, one or more lysine residues are methylated.

Its function is as follows. Forms part of the ribosomal stalk which helps the ribosome interact with GTP-bound translation factors. The polypeptide is Large ribosomal subunit protein uL11 (Thermotoga petrophila (strain ATCC BAA-488 / DSM 13995 / JCM 10881 / RKU-1)).